The primary structure comprises 135 residues: MEEKEQVDLNQLLNAIKSLTLQEIKIFTDKLQDELGISSDNLYSSRGILTESTSHNKEVEEIDEKTEFDIILEEVPSSSRITVIKVIRSITNSGLKEAKEFIEALPKTVKEGISKEEAESVKAQLEESGAKVTLR.

The protein belongs to the bacterial ribosomal protein bL12 family. As to quaternary structure, homodimer. Part of the ribosomal stalk of the 50S ribosomal subunit. Forms a multimeric L10(L12)X complex, where L10 forms an elongated spine to which 2 to 4 L12 dimers bind in a sequential fashion. Binds GTP-bound translation factors.

It localises to the plastid. Its subcellular location is the chloroplast. Functionally, forms part of the ribosomal stalk which helps the ribosome interact with GTP-bound translation factors. Is thus essential for accurate translation. The protein is Large ribosomal subunit protein bL12c of Chara vulgaris (Common stonewort).